Here is a 495-residue protein sequence, read N- to C-terminus: Glutamyl-tRNA(Gln) amidotransferase subunit A (495 aa).

Residues K79 and S159 each act as charge relay system in the active site. The Acyl-ester intermediate role is filled by S183.

This sequence belongs to the amidase family. GatA subfamily. Heterotrimer of A, B and C subunits.

It carries out the reaction L-glutamyl-tRNA(Gln) + L-glutamine + ATP + H2O = L-glutaminyl-tRNA(Gln) + L-glutamate + ADP + phosphate + H(+). Functionally, allows the formation of correctly charged Gln-tRNA(Gln) through the transamidation of misacylated Glu-tRNA(Gln) in organisms which lack glutaminyl-tRNA synthetase. The reaction takes place in the presence of glutamine and ATP through an activated gamma-phospho-Glu-tRNA(Gln). The protein is Glutamyl-tRNA(Gln) amidotransferase subunit A of Gluconobacter oxydans (strain 621H) (Gluconobacter suboxydans).